The chain runs to 130 residues: Small ribosomal subunit protein uS11 (130 aa).

This sequence belongs to the universal ribosomal protein uS11 family. Part of the 30S ribosomal subunit. Interacts with proteins S7 and S18. Binds to IF-3.

Functionally, located on the platform of the 30S subunit, it bridges several disparate RNA helices of the 16S rRNA. Forms part of the Shine-Dalgarno cleft in the 70S ribosome. This chain is Small ribosomal subunit protein uS11, found in Parasynechococcus marenigrum (strain WH8102).